A 330-amino-acid chain; its full sequence is Phosphate acyltransferase (330 aa).

Belongs to the PlsX family. As to quaternary structure, homodimer. Probably interacts with PlsY.

Its subcellular location is the cytoplasm. The enzyme catalyses a fatty acyl-[ACP] + phosphate = an acyl phosphate + holo-[ACP]. It participates in lipid metabolism; phospholipid metabolism. Functionally, catalyzes the reversible formation of acyl-phosphate (acyl-PO(4)) from acyl-[acyl-carrier-protein] (acyl-ACP). This enzyme utilizes acyl-ACP as fatty acyl donor, but not acyl-CoA. This is Phosphate acyltransferase from Streptococcus pneumoniae serotype 2 (strain D39 / NCTC 7466).